Here is a 920-residue protein sequence, read N- to C-terminus: 2-oxoadipate dehydrogenase complex component E1 (920 aa).

The segment at 299 to 322 (QGKTRGRQQVKQDGDYSTDPHSRP) is disordered. A compositionally biased stretch (basic and acidic residues) spans 308–322 (VKQDGDYSTDPHSRP).

The protein belongs to the alpha-ketoglutarate dehydrogenase family. The 2-oxoadipate dehydrogenase complex is composed of OADH (2-oxoadipate dehydrogenase; E1a), DLST (dihydrolipoamide succinyltransferase; E2) and DLD (dihydrolipoamide dehydrogenase; E3). E1a functional unit is a dimer. The cofactor is thiamine diphosphate.

The protein localises to the mitochondrion. The catalysed reaction is N(6)-[(R)-lipoyl]-L-lysyl-[protein] + 2-oxoadipate + H(+) = N(6)-[(R)-S(8)-glutaryldihydrolipoyl]-L-lysyl-[protein] + CO2. It functions in the pathway amino-acid degradation. Its function is as follows. 2-oxoadipate dehydrogenase (E1a) component of the 2-oxoadipate dehydrogenase complex (OADHC). Participates in the first step, rate limiting for the overall conversion of 2-oxoadipate (alpha-ketoadipate) to glutaryl-CoA and CO(2) catalyzed by the whole OADHC. Catalyzes the irreversible decarboxylation of 2-oxoadipate via the thiamine diphosphate (ThDP) cofactor and subsequent transfer of the decarboxylated acyl intermediate on an oxidized dihydrolipoyl group that is covalently amidated to the E2 enzyme (dihydrolipoyllysine-residue succinyltransferase or DLST). Can catalyze the decarboxylation of 2-oxoglutarate in vitro, but at a much lower rate than 2-oxoadipate. Responsible for the last step of L-lysine, L-hydroxylysine and L-tryptophan catabolism with the common product being 2-oxoadipate. This Danio rerio (Zebrafish) protein is 2-oxoadipate dehydrogenase complex component E1 (dhtkd1).